A 534-amino-acid polypeptide reads, in one-letter code: Endoglucanase 5 (534 aa).

An N-terminal signal peptide occupies residues 1 to 27; that stretch reads MSDVSGRFVVAAAVVAVSLAMAAAAAA. Asp82 acts as the Nucleophile in catalysis. Residues His432, Asp484, and Glu493 contribute to the active site. Positions 515–534 are disordered; the sequence is RRRGEDAPPSSTSPVAEDDL.

The protein belongs to the glycosyl hydrolase 9 (cellulase E) family.

The protein resides in the secreted. The enzyme catalyses Endohydrolysis of (1-&gt;4)-beta-D-glucosidic linkages in cellulose, lichenin and cereal beta-D-glucans.. The protein is Endoglucanase 5 of Oryza sativa subsp. japonica (Rice).